Reading from the N-terminus, the 439-residue chain is Serine/threonine-protein kinase 2 (439 aa).

Residues 87-439 (NDDFYHISTG…IFSDWINGGN (353 aa)) enclose the Protein kinase domain. Residues 93-101 (ISTGGYGIV) and K117 contribute to the ATP site. The Proton acceptor role is filled by D307.

This sequence belongs to the protein kinase superfamily. Ser/Thr protein kinase family. Poxviruses subfamily. Phosphorylated in vivo. Autophosphorylated in vitro.

It is found in the host endoplasmic reticulum. The protein resides in the host endoplasmic reticulum-Golgi intermediate compartment. The enzyme catalyses L-seryl-[protein] + ATP = O-phospho-L-seryl-[protein] + ADP + H(+). It carries out the reaction L-threonyl-[protein] + ATP = O-phospho-L-threonyl-[protein] + ADP + H(+). In terms of biological role, essential serine-protein kinase involved in the early stage of virion morphogenesis. The chain is Serine/threonine-protein kinase 2 (OPG054) from Vaccinia virus (strain Copenhagen) (VACV).